A 741-amino-acid polypeptide reads, in one-letter code: Mitofusin-1 (741 aa).

Over 1–584 (MAETVSPLKH…AAQEELMITL (584 aa)) the chain is Cytoplasmic. Positions 9 to 73 (KHFVLAKKAI…LAVIGEVLSR (65 aa)) are part of a helix bundle domain, formed by helices from N-terminal and C-terminal regions. In terms of domain architecture, Dynamin-type G spans 72–321 (SRRHMKVAFF…ARLQEFQNFE (250 aa)). The tract at residues 82 to 89 (GRTSSGKS) is G1 motif. 85-90 (SSGKSS) provides a ligand contact to GTP. The segment at 108–109 (TT) is G2 motif. The G3 motif stretch occupies residues 178–181 (DSPG). 237–240 (NRWD) is a GTP binding site. Residues 237-240 (NRWD) are G4 motif. Residue E266 is a region of interest, G5 motif. Residues S284 and K286 each coordinate GTP. The tract at residues 338–364 (EQHTIRAKQILDTVKNILDSVNVAAAE) is part of a helix bundle domain, formed by helices from N-terminal and C-terminal regions. The stretch at 371 to 408 (EEREDQIDRLDFIRNQMNLLTLDVKKKIKEVTEEVANK) forms a coiled coil. Residues 585–605 (ITGLASLTSRTSMGIIVVGGV) traverse the membrane as a helical segment. The Mitochondrial intermembrane portion of the chain corresponds to 606 to 608 (IWK). A helical membrane pass occupies residues 609–629 (TVGWKLISVTLSMYGALYLYE). Residues 630 to 741 (RLTWTTRAKE…QFLHPSSGES (112 aa)) are Cytoplasmic-facing. Residues 677–735 (FARLCQQVDVTQKHLEEEIARLSKEIDQLEKIQNNSKLLRNKAVQLESELENFSKQFLH) are a coiled coil. The part of a helix bundle domain, formed by helices from N-terminal and C-terminal regions stretch occupies residues 703–734 (DQLEKIQNNSKLLRNKAVQLESELENFSKQFL).

Belongs to the TRAFAC class dynamin-like GTPase superfamily. Dynamin/Fzo/YdjA family. Mitofusin subfamily. In terms of assembly, homodimer, also in the absence of bound GTP. Forms higher oligomers in the presence of a transition state GTP analog. Forms homomultimers and heteromultimers with MFN2. Oligomerization is essential for mitochondrion fusion. Component of a high molecular weight multiprotein complex. Interacts with VAT1. Interacts with THG1L; THG1L probably functions as a guanyl-nucleotide exchange factor/GEF, activating MFN1. Post-translationally, ubiquitinated by MARCHF5. When mitochondria are depolarized and dysfunctional, it is ubiquitinated by a SCF (SKP1-CUL1-F-box protein) E3 ubiquitin-protein ligase complex that contains FBXO7 and PRKN. Ubiquitinated by non-degradative ubiquitin by PRKN, promoting mitochondrial fusion; deubiquitination by USP30 inhibits mitochondrial fusion. As to expression, detected in adult heart. Detected in embryos (at protein level). Widely expressed.

It localises to the mitochondrion outer membrane. The catalysed reaction is GTP + H2O = GDP + phosphate + H(+). Mitochondrial outer membrane GTPase that mediates mitochondrial clustering and fusion. Membrane clustering requires GTPase activity. It may involve a major rearrangement of the coiled coil domains. Mitochondria are highly dynamic organelles, and their morphology is determined by the equilibrium between mitochondrial fusion and fission events. Overexpression induces the formation of mitochondrial networks (in vitro). Has low GTPase activity. The polypeptide is Mitofusin-1 (Mfn1) (Mus musculus (Mouse)).